A 994-amino-acid polypeptide reads, in one-letter code: Alpha-mannosidase F (994 aa).

The signal sequence occupies residues 1–20; the sequence is MKNFYYFILILLFFNEVCYS. Zn(2+) is bound by residues H35, D37, and D151. The active-site Nucleophile is D151. N247 and N381 each carry an N-linked (GlcNAc...) asparagine glycan. Residue H392 participates in Zn(2+) binding. N-linked (GlcNAc...) asparagine glycosylation is found at N554, N712, and N932.

The protein belongs to the glycosyl hydrolase 38 family. Zn(2+) is required as a cofactor.

Its subcellular location is the secreted. The enzyme catalyses Hydrolysis of terminal, non-reducing alpha-D-mannose residues in alpha-D-mannosides.. The protein is Alpha-mannosidase F (manF) of Dictyostelium discoideum (Social amoeba).